The primary structure comprises 233 residues: Ribonuclease HII (233 aa).

The region spanning 21–211 (KVIAGVDEVG…LDALPQWRHL (191 aa)) is the RNase H type-2 domain. A divalent metal cation is bound by residues D27, E28, and D119.

Belongs to the RNase HII family. The cofactor is Mn(2+). It depends on Mg(2+) as a cofactor.

It localises to the cytoplasm. The enzyme catalyses Endonucleolytic cleavage to 5'-phosphomonoester.. Its function is as follows. Endonuclease that specifically degrades the RNA of RNA-DNA hybrids. In Streptomyces avermitilis (strain ATCC 31267 / DSM 46492 / JCM 5070 / NBRC 14893 / NCIMB 12804 / NRRL 8165 / MA-4680), this protein is Ribonuclease HII.